The following is a 490-amino-acid chain: Kinetochore protein Nuf2 homolog (490 aa).

Coiled-coil stretches lie at residues 146–280 (DRKF…KLEA) and 310–407 (DLID…SETI). Disordered stretches follow at residues 346 to 365 (QSET…EERQ) and 468 to 490 (IDAG…SVFK).

Belongs to the NUF2 family. Component of the NDC80 complex, which is composed of at least ndc-80 and him-10. The NDC80 complex interacts with knl-1.

The protein resides in the nucleus. It is found in the chromosome. Its subcellular location is the centromere. It localises to the kinetochore. Functionally, acts as a component of the essential kinetochore-associated NDC80 complex, which is required for chromosome segregation in mitosis and meiosis and spindle checkpoint activity. The ndc-80 complex synergistically enhances the affinity of the ska-1 complex for microtubules and may allow the ndc-80 complex to track depolymerizing microtubules. The protein is Kinetochore protein Nuf2 homolog (him-10) of Caenorhabditis elegans.